The primary structure comprises 291 residues: GTPase Era (291 aa).

An Era-type G domain is found at 2–167 (KSGFVSIIGR…LDEIVKYLDE (166 aa)). Residues 10 to 17 (GRTNAGKS) are G1. Residue 10-17 (GRTNAGKS) coordinates GTP. The interval 36–40 (NATRR) is G2. The G3 stretch occupies residues 57–60 (DTPG). Residues 57–61 (DTPGL) and 116–119 (NKVD) each bind GTP. The G4 stretch occupies residues 116–119 (NKVD). Positions 146 to 148 (YSS) are G5. The KH type-2 domain occupies 186–274 (YRDFILESIY…LLKLFVTVKK (89 aa)).

This sequence belongs to the TRAFAC class TrmE-Era-EngA-EngB-Septin-like GTPase superfamily. Era GTPase family. In terms of assembly, monomer.

It is found in the cytoplasm. It localises to the cell inner membrane. Functionally, an essential GTPase that binds both GDP and GTP, with rapid nucleotide exchange. Plays a role in 16S rRNA processing and 30S ribosomal subunit biogenesis and possibly also in cell cycle regulation and energy metabolism. The protein is GTPase Era of Campylobacter jejuni (strain RM1221).